The following is an 877-amino-acid chain: Phosphoenolpyruvate carboxylase (877 aa).

Residues His-137 and Lys-544 contribute to the active site.

Belongs to the PEPCase type 1 family. Requires Mg(2+) as cofactor.

It carries out the reaction oxaloacetate + phosphate = phosphoenolpyruvate + hydrogencarbonate. In terms of biological role, forms oxaloacetate, a four-carbon dicarboxylic acid source for the tricarboxylic acid cycle. The polypeptide is Phosphoenolpyruvate carboxylase (Edwardsiella ictaluri (strain 93-146)).